A 248-amino-acid polypeptide reads, in one-letter code: Triosephosphate isomerase (248 aa).

A substrate-binding site is contributed by 9–11 (NWK). H94 functions as the Electrophile in the catalytic mechanism. E166 (proton acceptor) is an active-site residue. Residues G172, S212, and 233 to 234 (GG) each bind substrate.

Belongs to the triosephosphate isomerase family. In terms of assembly, homodimer.

The protein resides in the cytoplasm. The catalysed reaction is D-glyceraldehyde 3-phosphate = dihydroxyacetone phosphate. It participates in carbohydrate biosynthesis; gluconeogenesis. It functions in the pathway carbohydrate degradation; glycolysis; D-glyceraldehyde 3-phosphate from glycerone phosphate: step 1/1. Functionally, involved in the gluconeogenesis. Catalyzes stereospecifically the conversion of dihydroxyacetone phosphate (DHAP) to D-glyceraldehyde-3-phosphate (G3P). This chain is Triosephosphate isomerase, found in Clostridium beijerinckii (strain ATCC 51743 / NCIMB 8052) (Clostridium acetobutylicum).